A 233-amino-acid chain; its full sequence is Small ribosomal subunit protein uS3 (233 aa).

Residues 39–107 (VRQFLTKELS…PAQINIAEVR (69 aa)) enclose the KH type-2 domain.

The protein belongs to the universal ribosomal protein uS3 family. In terms of assembly, part of the 30S ribosomal subunit. Forms a tight complex with proteins S10 and S14.

Binds the lower part of the 30S subunit head. Binds mRNA in the 70S ribosome, positioning it for translation. The sequence is that of Small ribosomal subunit protein uS3 from Vibrio vulnificus (strain CMCP6).